Consider the following 503-residue polypeptide: Dihydropyrimidinase (503 aa).

The Zn(2+) site is built by H66, H68, and K158. K158 carries the post-translational modification N6-carboxylysine. Substrate is bound at residue Y163. Positions 191, 247, and 325 each coordinate Zn(2+). Substrate is bound at residue N346.

The protein belongs to the metallo-dependent hydrolases superfamily. Hydantoinase/dihydropyrimidinase family. Homotetramer. Zn(2+) serves as cofactor. Post-translationally, carboxylation allows a single lysine to coordinate two zinc ions.

The catalysed reaction is 5,6-dihydrouracil + H2O = 3-(carbamoylamino)propanoate + H(+). In terms of biological role, catalyzes the second step of the reductive pyrimidine degradation, the reversible hydrolytic ring opening of dihydropyrimidines. Can catalyze the ring opening of 5,6-dihydrouracil to N-carbamyl-alanine and of 5,6-dihydrothymine to N-carbamyl-amino isobutyrate. This chain is Dihydropyrimidinase (pyd2), found in Dictyostelium discoideum (Social amoeba).